The following is a 509-amino-acid chain: Cysteine--tRNA ligase (509 aa).

Cys-19 lines the Zn(2+) pocket. Positions 21–31 (PTVYNDAHIGH) match the 'HIGH' region motif. Zn(2+)-binding residues include Cys-213, His-238, and Glu-242. The short motif at 284-288 (KMSKS) is the 'KMSKS' region element. An ATP-binding site is contributed by Lys-287.

Belongs to the class-I aminoacyl-tRNA synthetase family. Zn(2+) serves as cofactor.

It catalyses the reaction tRNA(Cys) + L-cysteine + ATP = L-cysteinyl-tRNA(Cys) + AMP + diphosphate. The polypeptide is Cysteine--tRNA ligase (CARS) (Acanthamoeba polyphaga (Amoeba)).